The following is a 414-amino-acid chain: Serine/threonine transporter SstT (414 aa).

8 helical membrane-spanning segments follow: residues 16–36 (GSLV…AWIS), 46–66 (LGTL…LMLV), 84–104 (ILFL…VFSF), 143–163 (ALLN…GFAL), 180–200 (AVTF…FGLV), 219–239 (LVVL…LLVF), 300–320 (MAGA…TLGV), and 332–352 (VVAS…LLLI).

This sequence belongs to the dicarboxylate/amino acid:cation symporter (DAACS) (TC 2.A.23) family.

The protein localises to the cell inner membrane. The catalysed reaction is L-serine(in) + Na(+)(in) = L-serine(out) + Na(+)(out). The enzyme catalyses L-threonine(in) + Na(+)(in) = L-threonine(out) + Na(+)(out). Its function is as follows. Involved in the import of serine and threonine into the cell, with the concomitant import of sodium (symport system). This Salmonella agona (strain SL483) protein is Serine/threonine transporter SstT.